The primary structure comprises 76 residues: Acyl carrier protein (76 aa).

The Carrier domain occupies 2 to 76 (SNIEERVIKV…QSAIDFVKSR (75 aa)). Ser-37 bears the O-(pantetheine 4'-phosphoryl)serine mark.

This sequence belongs to the acyl carrier protein (ACP) family. Post-translationally, 4'-phosphopantetheine is transferred from CoA to a specific serine of apo-ACP by AcpS. This modification is essential for activity because fatty acids are bound in thioester linkage to the sulfhydryl of the prosthetic group.

It is found in the cytoplasm. It functions in the pathway lipid metabolism; fatty acid biosynthesis. Its function is as follows. Carrier of the growing fatty acid chain in fatty acid biosynthesis. This Dichelobacter nodosus (strain VCS1703A) protein is Acyl carrier protein.